Reading from the N-terminus, the 154-residue chain is Universal stress protein Sll1388 (154 aa).

Belongs to the universal stress protein A family.

This is Universal stress protein Sll1388 from Synechocystis sp. (strain ATCC 27184 / PCC 6803 / Kazusa).